The primary structure comprises 1203 residues: Rho GTPase-activating protein gacGG (1203 aa).

RCC1 repeat units lie at residues 52 to 104 (TGEL…AIME), 106 to 148 (GLLY…VVAD), 155 to 204 (KRSV…AIVE), 206 to 255 (NEVF…ARSG), 257 to 298 (GNVC…VLSE), 299 to 359 (KGEI…EGRN), and 361 to 410 (LSVY…YLRG). The disordered stretch occupies residues 316–343 (KLDVNSSPNINSSSGTTTPTTNTTTTTK). Low complexity predominate over residues 320-343 (NSSPNINSSSGTTTPTTNTTTTTK). One can recognise a Rho-GAP domain in the interval 381–594 (VDIAESMRRK…TIMKQYPLME (214 aa)). The stretch at 649 to 679 (TLEIKNNQNNQNNQKENNNNNNNINNSNNNN) forms a coiled coil. Disordered stretches follow at residues 657–725 (NNQN…TGNI), 746–789 (KDGN…NLSP), and 831–852 (FANS…LIGS). Composition is skewed to low complexity over residues 746–788 (KDGN…PNLS) and 833–852 (NSGS…LIGS). The stretch at 995-1078 (FDLLEKSMTE…ISNQNLSRVN (84 aa)) forms a coiled coil.

Its subcellular location is the cytoplasm. In terms of biological role, rho GTPase-activating protein involved in the signal transduction pathway. This Dictyostelium discoideum (Social amoeba) protein is Rho GTPase-activating protein gacGG (gacGG).